The primary structure comprises 428 residues: Acylglycerol kinase, mitochondrial (428 aa).

Positions S18–G34 are hydrophobic. A DAGKc domain is found at S61–Q202.

This sequence belongs to the AGK family. As to quaternary structure, component of the TIM22 complex. Requires Mg(2+) as cofactor.

Its subcellular location is the mitochondrion inner membrane. It localises to the mitochondrion intermembrane space. It carries out the reaction a monoacylglycerol + ATP = a monoacyl-sn-glycero-3-phosphate + ADP + H(+). The enzyme catalyses a 1,2-diacyl-sn-glycerol + ATP = a 1,2-diacyl-sn-glycero-3-phosphate + ADP + H(+). It catalyses the reaction an N-acylsphing-4-enine + ATP = an N-acylsphing-4-enine 1-phosphate + ADP + H(+). The catalysed reaction is 1-(9Z-octadecenoyl)-sn-glycerol + ATP = 1-(9Z-octadecenoyl)-sn-glycero-3-phosphate + ADP + H(+). It carries out the reaction 1,2-di-(9Z-octadecenoyl)-sn-glycerol + ATP = 1,2-di-(9Z-octadecenoyl)-sn-glycero-3-phosphate + ADP + H(+). The enzyme catalyses a 1-acyl-sn-glycerol + ATP = a 1-acyl-sn-glycero-3-phosphate + ADP + H(+). It catalyses the reaction 1-hexadecanoyl-sn-glycerol + ATP = 1-hexadecanoyl-sn-glycero-3-phosphate + ADP + H(+). The catalysed reaction is a 2-acylglycerol + ATP = a 2-acyl-sn-glycerol 3-phosphate + ADP + H(+). It carries out the reaction 2-(5Z,8Z,11Z,14Z-eicosatetraenoyl)-glycerol + ATP = 2-(5Z,8Z,11Z,14Z-eicosatetraenoyl)-sn-glycero-3-phosphate + ADP + H(+). The enzyme catalyses 1-(5Z,8Z,11Z,14Z-eicosatetraenoyl)-sn-glycerol + ATP = 1-(5Z,8Z,11Z,14Z-eicosatetraenoyl)-sn-glycero-3-phosphate + ADP + H(+). It catalyses the reaction N-(hexanoyl)sphing-4-enine + ATP = N-hexanoylsphing-4-enine 1-phosphate + ADP + H(+). Its pathway is lipid metabolism; glycerolipid metabolism. Functionally, lipid kinase that can phosphorylate both monoacylglycerol and diacylglycerol to form lysophosphatidic acid (LPA) and phosphatidic acid (PA), respectively. Phosphorylates ceramide but not sphingosine. Phosphorylates 1,2-dioleoylglycerol more rapidly than 2,3-dioleoylglycerol. Independently of its lipid kinase activity, acts as a component of the TIM22 complex. The TIM22 complex mediates the import and insertion of multi-pass transmembrane proteins into the mitochondrial inner membrane by forming a twin-pore translocase that uses the membrane potential as the external driving force. This chain is Acylglycerol kinase, mitochondrial, found in Xenopus laevis (African clawed frog).